Consider the following 359-residue polypeptide: Carbamoyl phosphate synthase small chain (359 aa).

A CPSase region spans residues 1 to 169 (MTKRILVLED…TKTSYPAPGV (169 aa)). Positions 46, 220, and 222 each coordinate L-glutamine. The 187-residue stretch at 172-358 (SVVLVDFGLK…IEMMEVFKQS (187 aa)) folds into the Glutamine amidotransferase type-1 domain. Cysteine 247 serves as the catalytic Nucleophile. Residues methionine 248, glutamine 251, asparagine 289, glycine 291, and tyrosine 292 each coordinate L-glutamine. Active-site residues include histidine 331 and aspartate 333.

Belongs to the CarA family. Composed of two chains; the small (or glutamine) chain promotes the hydrolysis of glutamine to ammonia, which is used by the large (or ammonia) chain to synthesize carbamoyl phosphate. Tetramer of heterodimers (alpha,beta)4.

The enzyme catalyses hydrogencarbonate + L-glutamine + 2 ATP + H2O = carbamoyl phosphate + L-glutamate + 2 ADP + phosphate + 2 H(+). The catalysed reaction is L-glutamine + H2O = L-glutamate + NH4(+). The protein operates within amino-acid biosynthesis; L-arginine biosynthesis; carbamoyl phosphate from bicarbonate: step 1/1. It functions in the pathway pyrimidine metabolism; UMP biosynthesis via de novo pathway; (S)-dihydroorotate from bicarbonate: step 1/3. In terms of biological role, small subunit of the glutamine-dependent carbamoyl phosphate synthetase (CPSase). CPSase catalyzes the formation of carbamoyl phosphate from the ammonia moiety of glutamine, carbonate, and phosphate donated by ATP, constituting the first step of 2 biosynthetic pathways, one leading to arginine and/or urea and the other to pyrimidine nucleotides. The small subunit (glutamine amidotransferase) binds and cleaves glutamine to supply the large subunit with the substrate ammonia. This is Carbamoyl phosphate synthase small chain from Streptococcus pneumoniae (strain ATCC BAA-255 / R6).